A 588-amino-acid polypeptide reads, in one-letter code: uncharacterized protein (588 aa).

Positions 1-19 (MRSTAYLTALLSFLGATHA) are cleaved as a signal peptide. Residues Asn-45 and Asn-104 are each glycosylated (N-linked (GlcNAc...) asparagine). Residues 118–303 (GQGRIPLYSA…TSVTLRTFKD (186 aa)) form the FAD-binding PCMH-type domain. The residue at position 156 (His-156) is a Pros-8alpha-FAD histidine. Asn-179, Asn-312, Asn-320, Asn-351, Asn-370, and Asn-446 each carry an N-linked (GlcNAc...) asparagine glycan.

The protein belongs to the oxygen-dependent FAD-linked oxidoreductase family. Requires FAD as cofactor.

The protein resides in the secreted. This is an uncharacterized protein from Arthroderma benhamiae (strain ATCC MYA-4681 / CBS 112371) (Trichophyton mentagrophytes).